Here is a 755-residue protein sequence, read N- to C-terminus: Primary amine oxidase (755 aa).

A signal peptide spans 1–30 (MANGLKFSPRKTALALAVAVVCAWQSPVFA). Residues 411–422 (YLDSGDYGMGTL) and 493–498 (VGNYDY) contribute to the substrate site. Asp-413 (proton acceptor) is an active-site residue. Tyr-496 (schiff-base intermediate with substrate; via topaquinone) is an active-site residue. At Tyr-496 the chain carries 2',4',5'-topaquinone. Cu cation contacts are provided by His-554 and His-556. Residues Asp-563, Leu-564, Asp-565, Glu-603, Tyr-697, Asp-700, Glu-702, and Asp-708 each contribute to the Ca(2+) site. Residue Asp-563 participates in Mn(2+) binding. Asp-565 serves as a coordination point for Mn(2+). Asp-708 provides a ligand contact to Mn(2+). His-719 lines the Cu cation pocket.

This sequence belongs to the copper/topaquinone oxidase family. In terms of assembly, homodimer. It depends on Cu cation as a cofactor. Requires Zn(2+) as cofactor. The cofactor is Ca(2+). L-topaquinone serves as cofactor. Mn(2+) is required as a cofactor. In terms of processing, topaquinone (TPQ) is generated by copper-dependent autoxidation of a specific tyrosyl residue.

The protein resides in the periplasm. The catalysed reaction is a primary methyl amine + O2 + H2O = an aldehyde + H2O2 + NH4(+). Its function is as follows. Active on tyramine, tryptamine, beta-phenethylamine and dopamine. The sequence is that of Primary amine oxidase (maoA) from Klebsiella aerogenes (Enterobacter aerogenes).